Consider the following 370-residue polypeptide: Dihydroorotate dehydrogenase (quinone) (370 aa).

FMN is bound by residues 67–71 (AGFDK) and Thr-91. Lys-71 is a binding site for substrate. 116–120 (NRMGF) lines the substrate pocket. FMN-binding residues include Asn-146 and Asn-179. Asn-179 serves as a coordination point for substrate. Ser-182 acts as the Nucleophile in catalysis. Asn-184 provides a ligand contact to substrate. FMN-binding residues include Lys-222 and Thr-250. 251–252 (NT) serves as a coordination point for substrate. FMN-binding positions include Gly-276, Gly-305, and 326-327 (YS).

The protein belongs to the dihydroorotate dehydrogenase family. Type 2 subfamily. As to quaternary structure, monomer. It depends on FMN as a cofactor.

It is found in the cell membrane. It catalyses the reaction (S)-dihydroorotate + a quinone = orotate + a quinol. It functions in the pathway pyrimidine metabolism; UMP biosynthesis via de novo pathway; orotate from (S)-dihydroorotate (quinone route): step 1/1. Its function is as follows. Catalyzes the conversion of dihydroorotate to orotate with quinone as electron acceptor. In Streptomyces griseus subsp. griseus (strain JCM 4626 / CBS 651.72 / NBRC 13350 / KCC S-0626 / ISP 5235), this protein is Dihydroorotate dehydrogenase (quinone).